We begin with the raw amino-acid sequence, 400 residues long: Acetyl-CoA decarbonylase/synthase complex subunit delta (400 aa).

Belongs to the CdhD family. As to quaternary structure, heterodimer of delta and gamma chains. The ACDS complex is made up of alpha, epsilon, beta, gamma and delta chains with a probable stoichiometry of (alpha(2)epsilon(2))(4)-beta(8)-(gamma(1)delta(1))(8).

In terms of biological role, part of a complex that catalyzes the reversible cleavage of acetyl-CoA, allowing autotrophic growth from CO(2). Probably maintains the overall quaternary structure of the ACDS complex. This chain is Acetyl-CoA decarbonylase/synthase complex subunit delta, found in Methanopyrus kandleri (strain AV19 / DSM 6324 / JCM 9639 / NBRC 100938).